Consider the following 561-residue polypeptide: MSENLRSRAVTQGSQRTPNRAMLRAVGFGDDDFNKPIVGVANGFSTITPCNMGINDLAKRAEAGIKSAGGMPQMFGTITISDGISMGTEGMKYSLVSRDVIADSIETACNGQSMDGVIAIGGCDKNMPGAMIAMARMNIPAIFVYGGTIKPGHYNGEDLTVVSAFEAVGQHSAGKIDDNTLLAIERNACPGAGSCGGMFTANTMSSAFEVMGMSLPYSSTMAAEDAEKADSTEKSAFVLVNAIRNQILPRQILTRKAFENAVSVIMAVGGSTNAVLHLLAIANTIGVDLTLDDFETIRQRVPVLCDLKPSGRYVTVNLHQAGGIPQVMKMLLNHGLLHGDALTISGQTIAEILADVPDEPPANQDVIRSWDNPVYKEGHLAILKGNLASEGAVAKISGVKNPQITGPARVFESEEECLEAILAGKINAGDVIIVRYEGPRGGPGMREMLAPTSAIIGAGLGDSVGLITDGRFSGGTYGLVVGHVAPEAYVGGTIGLVEEGDSITIDAKKKLLQVNVSEEELSQRRANWKAPEPRYQRGVLGKYAKLVSSSSLGAVTDLNLF.

C50 serves as a coordination point for [2Fe-2S] cluster. D82 serves as a coordination point for Mg(2+). C123 contacts [2Fe-2S] cluster. The Mg(2+) site is built by D124 and K125. K125 carries the N6-carboxylysine modification. A [2Fe-2S] cluster-binding site is contributed by C195. E447 provides a ligand contact to Mg(2+). S473 functions as the Proton acceptor in the catalytic mechanism.

It belongs to the IlvD/Edd family. In terms of assembly, homodimer. [2Fe-2S] cluster is required as a cofactor. It depends on Mg(2+) as a cofactor.

It carries out the reaction (2R)-2,3-dihydroxy-3-methylbutanoate = 3-methyl-2-oxobutanoate + H2O. The enzyme catalyses (2R,3R)-2,3-dihydroxy-3-methylpentanoate = (S)-3-methyl-2-oxopentanoate + H2O. It participates in amino-acid biosynthesis; L-isoleucine biosynthesis; L-isoleucine from 2-oxobutanoate: step 3/4. It functions in the pathway amino-acid biosynthesis; L-valine biosynthesis; L-valine from pyruvate: step 3/4. In terms of biological role, functions in the biosynthesis of branched-chain amino acids. Catalyzes the dehydration of (2R,3R)-2,3-dihydroxy-3-methylpentanoate (2,3-dihydroxy-3-methylvalerate) into 2-oxo-3-methylpentanoate (2-oxo-3-methylvalerate) and of (2R)-2,3-dihydroxy-3-methylbutanoate (2,3-dihydroxyisovalerate) into 2-oxo-3-methylbutanoate (2-oxoisovalerate), the penultimate precursor to L-isoleucine and L-valine, respectively. The protein is Dihydroxy-acid dehydratase of Crocosphaera subtropica (strain ATCC 51142 / BH68) (Cyanothece sp. (strain ATCC 51142)).